The sequence spans 922 residues: Coronin-7 (922 aa).

WD repeat units follow at residues 75–115, 124–163, 166–205, and 209–253; these read CHSD…EALP, PEEL…HLTE, AHKD…QASQ, and AHEN…SALA. The interval 386–462 is disordered; the sequence is NPAHRPHPRF…TSPSQRSLQS (77 aa). Low complexity predominate over residues 423–456; sequence SEGFSSPSSLVSPSTPSSLGLSLSSTSGIGTSPS. Residues Ser-459 and Ser-462 each carry the phosphoserine modification. Lys-469 is covalently cross-linked (Glycyl lysine isopeptide (Lys-Gly) (interchain with G-Cter in ubiquitin)). WD repeat units lie at residues 539–579, 589–629, 632–671, and 725–765; these read QNGA…LKNV, GHTE…EQLR, GHQD…LPLQ, and DVAP…PFFL. A disordered region spans residues 854 to 922; it reads LQPPGMTPVS…FEGVDEDEWD (69 aa). Thr-874 carries the post-translational modification Phosphothreonine. A compositionally biased stretch (basic and acidic residues) spans 881–893; the sequence is LEEKSDQQKKEEL. The residue at position 912 (Ser-912) is a Phosphoserine.

It belongs to the WD repeat coronin family. In terms of assembly, interacts with clathrin adapter AP1 complex. This interaction takes place at Golgi membranes and not AP1-positive endosomal membranes. Interacts (when ubiquitinated at Lys-469) with EPS15. The membrane-associated form is phosphorylated on tyrosine residues. Post-translationally, ubiquitinated via 'Lys-33'-linked ubiquitin chains by the BCR(KLHL20) E3 ubiquitin ligase complex: 'Lys-33'-linked ubiquitination promotes interaction with EPS15 and facilitates actin polymerization at the trans-Golgi network, thereby facilitating post-Golgi trafficking. Deubiquitinated by ZRANB1/TRABID.

The protein localises to the golgi apparatus membrane. Its subcellular location is the golgi apparatus. The protein resides in the trans-Golgi network. It is found in the cytoplasmic vesicle. It localises to the cytoplasm. The protein localises to the cytosol. Functionally, F-actin regulator involved in anterograde Golgi to endosome transport: upon ubiquitination via 'Lys-33'-linked ubiquitin chains by the BCR(KLHL20) E3 ubiquitin ligase complex, interacts with EPS15 and localizes to the trans-Golgi network, where it promotes actin polymerization, thereby facilitating post-Golgi trafficking. May play a role in the maintenance of the Golgi apparatus morphology. The polypeptide is Coronin-7 (Coro7) (Rattus norvegicus (Rat)).